Reading from the N-terminus, the 333-residue chain is MSKIKPAKGAPYARILGVGGYRPTRVVPNEVILETIDSSDEWIRSRSGIQTRHWANDEETVAAMSIEASGKAIADAGITAAQVGAVIVSTVTHFKQTPAVATEIADKLGTNKAAAFDISAGCAGFGYGLTLAKGMIVEGSAEYVLVIGVERLSDLTDLEDRATAFLFGDGAGAVVVGPSNEPAIGPTIWGSEGDKAETIKQTVPWTDYREGGVERFPAITQEGQAVFRWAVFEMAKVAQQALDAAGVAAADLDVFIPHQANERIIDSMVKTLKLPESVTVARDVRTTGNTSAASIPLAMERLLATGEAKSGDTALVIGFGAGLVYAASVVTLP.

Active-site residues include Cys122 and His258. Residues 259-263 (QANER) are ACP-binding. The active site involves Asn289.

Belongs to the thiolase-like superfamily. FabH family. In terms of assembly, homodimer.

The protein localises to the cytoplasm. The catalysed reaction is butanoyl-CoA + malonyl-[ACP] + H(+) = 3-oxohexanoyl-[ACP] + CO2 + CoA. The enzyme catalyses malonyl-[ACP] + acetyl-CoA + H(+) = 3-oxobutanoyl-[ACP] + CO2 + CoA. It carries out the reaction 2-methylpropanoyl-CoA + malonyl-[ACP] + H(+) = 4-methyl-3-oxopentanoyl-[ACP] + CO2 + CoA. It functions in the pathway lipid metabolism; fatty acid biosynthesis. Inhibited by thiolactomycin. Catalyzes the condensation reaction of fatty acid synthesis by the addition to an acyl acceptor of two carbons from malonyl-ACP. Catalyzes the first condensation reaction which initiates fatty acid synthesis and may therefore play a role in governing the total rate of fatty acid production. Possesses both acetoacetyl-ACP synthase and acetyl transacylase activities. Utilizes both straight and branched-chain acyl-CoAs. The order of reactivity with the various acyl-CoA substrates at saturation is butanoyl-CoA &gt; acetyl-CoA &gt; 2-methylpropanoyl-CoA (or isobutyryl-CoA). Not involved in tetracenomycin C (TCM C) biosynthesis. The sequence is that of Beta-ketoacyl-[acyl-carrier-protein] synthase III (fabH) from Streptomyces glaucescens.